The primary structure comprises 507 residues: FAD-linked oxidoreductase OXR1 (507 aa).

A signal peptide spans 1–21; sequence MTIKFASLILAGLGLGSGALG. N-linked (GlcNAc...) asparagine glycans are attached at residues Asn34 and Asn65. Positions 73–245 constitute an FAD-binding PCMH-type domain; that stretch reads YAPPTFKVSV…VSATYKLKPL (173 aa). 2 N-linked (GlcNAc...) asparagine glycosylation sites follow: Asn263 and Asn288.

The protein belongs to the oxygen-dependent FAD-linked oxidoreductase family. FAD is required as a cofactor.

The enzyme catalyses dihydropyriculol + A = pyriculol + AH2. It carries out the reaction dihydropyriculariol + A = pyriculariol + AH2. It functions in the pathway polyketide biosynthesis. In terms of biological role, FAD-linked oxidoreductase; part of the gene cluster that mediates the biosynthesis of pyriculol and pyriculariol, two heptaketides that induce lesion formation upon application on rice leaves but are dispensable for pathogenicity. The highly reducing polyketide synthase synthesizes the heptaketide backbone of pyriculol and pyriculariol. Pyriculol and pyriculariol contain several hydroxyl moieties and double bonds, so it can be assumed that several reduction steps occur during biosynthesis. These reactions could be executed by PKS19 itself or partly by the tailoring enzymes OXR1, OXR2, RED1, RED2 or RED3, identified within the cluster. The FAD-linked oxidoreductase OXR1 is the only tailoring enzyme for which the function has been determined yet, and is involved in the oxidation of dihydropyriculol and dihydropyriculariol into pyriculol and pyriculariol, respectively. The sequence is that of FAD-linked oxidoreductase OXR1 from Pyricularia oryzae (strain 70-15 / ATCC MYA-4617 / FGSC 8958) (Rice blast fungus).